We begin with the raw amino-acid sequence, 156 residues long: Glutamate-rich protein 2 (156 aa).

Disordered regions lie at residues 29–66 (LQDI…TQAP) and 116–156 (EKTQ…EDGS). 2 stretches are compositionally biased toward acidic residues: residues 39–56 (SAED…DDED) and 140–156 (SDEE…EDGS).

The sequence is that of Glutamate-rich protein 2 (ERICH2) from Homo sapiens (Human).